Consider the following 142-residue polypeptide: Transcriptional regulator MraZ (142 aa).

SpoVT-AbrB domains follow at residues 5-48 (EFEY…PLCE) and 77-120 (AFDV…DKET).

Belongs to the MraZ family. Forms oligomers.

Its subcellular location is the cytoplasm. The protein resides in the nucleoid. The protein is Transcriptional regulator MraZ of Dehalococcoides mccartyi (strain ATCC BAA-2266 / KCTC 15142 / 195) (Dehalococcoides ethenogenes (strain 195)).